We begin with the raw amino-acid sequence, 1460 residues long: CLIP-associating protein 1-A (1460 aa).

2 HEAT repeats span residues 87–124 (TQLG…QASN) and 163–200 (LTLS…HVGE). The interval 237-293 (SDKNFDDEDSVDGNRPSSASSSASSKAPQTARRGVSLGTARRPGPSSAAAKTGGTAK) is disordered. The segment covering 279 to 293 (PGPSSAAAKTGGTAK) has biased composition (low complexity). 2 HEAT repeats span residues 407–442 (HGAE…IRHT) and 443–479 (HVPR…EWQT). 3 disordered regions span residues 545–605 (SDSI…IDVN), 640–733 (IRTR…RFGI), and 778–800 (PYGM…ERSY). Positions 550–569 (SLPQSDRSSSSSQESLNRPL) are enriched in low complexity. Residues 571–597 (TKRSPTGSTVSRASSTTSKSTPGSLQR) show a composition bias toward polar residues. The span at 645 to 659 (QSSGSTTSTASTPAD) shows a compositional bias: low complexity. 2 stretches are compositionally biased toward polar residues: residues 669–681 (VSQS…SNSP) and 715–724 (QGCSRETSPS). Residues 789 to 800 (SDASSACSERSY) show a composition bias toward low complexity. One copy of the HEAT 5 repeat lies at 942–979 (FIVDQTQTPNLKVKVAILKYIESLARQMDPTDFVNSSE). The tract at residues 1041 to 1084 (LKNSSNSSMGSPSNTIGRTPSRHSSSRASPLTSPTNCSHGGLSP) is disordered. Residues 1042 to 1054 (KNSSNSSMGSPSN) are compositionally biased toward low complexity. Polar residues predominate over residues 1066 to 1078 (SRASPLTSPTNCS). HEAT repeat units follow at residues 1272–1309 (LLLE…YAEL) and 1390–1427 (GLLQ…YLAQ).

This sequence belongs to the CLASP family.

It localises to the cytoplasm. The protein resides in the cytoskeleton. The protein localises to the microtubule organizing center. It is found in the centrosome. Its subcellular location is the chromosome. It localises to the centromere. The protein resides in the kinetochore. The protein localises to the spindle. It is found in the golgi apparatus. Its subcellular location is the trans-Golgi network. Microtubule plus-end tracking protein that promotes the stabilization of dynamic microtubules during anaphase. Plays a crucial role in chromatin-induced microtubule formation. May also act at microtubule minus ends. May be involved in the nucleation of noncentrosomal microtubules originating from the trans-Golgi network (TGN). This Xenopus laevis (African clawed frog) protein is CLIP-associating protein 1-A (clasp1-a).